Here is a 717-residue protein sequence, read N- to C-terminus: F-box only protein 42 (717 aa).

Acidic residues predominate over residues 1 to 30 (MASSSDSEDDSFMAVDQEETVLEGTMEQDE). The interval 1–47 (MASSSDSEDDSFMAVDQEETVLEGTMEQDEEPHPVLEAEETRHNRSM) is disordered. Positions 31-43 (EPHPVLEAEETRH) are enriched in basic and acidic residues. Residues 44–93 (NRSMSELPEEVLEYILSFLSPYQEHKTAALVCKQWYRLIKGVAHQCYHGF) enclose the F-box domain. Kelch repeat units lie at residues 132 to 184 (SMYV…VYKD), 186 to 242 (LVLF…VIDD), 244 to 293 (MIVF…VIDD), and 295 to 342 (TILI…LWCH). 2 disordered regions span residues 361 to 472 (RAPL…SAAE) and 508 to 539 (PASS…GVHT). Residues 363–376 (PLSPSLNSRPSPIS) are compositionally biased toward low complexity. A phosphoserine mark is found at Ser365 and Ser373. Position 378 is a phosphothreonine (Thr378). 2 stretches are compositionally biased toward polar residues: residues 416-426 (QRQTPSGSREG) and 455-469 (SLDS…STPS). Ser552 is subject to Phosphoserine. Positions 570-596 (GPSASAALSPPLGSSPGSPGSQSLSSG) are enriched in low complexity. Residues 570 to 635 (GPSASAALSP…PQSLNVGKPL (66 aa)) form a disordered region.

Component of some SCF complex, composed of CUL1, SKP1, RBX1 and FBXO42. Interacts (via the kelch domain) with p53/TP53; interaction is direct.

Its function is as follows. Substrate-recognition component of some SCF (SKP1-CUL1-F-box protein)-type E3 ubiquitin ligase complex. Specifically recognizes p53/TP53, promoting its ubiquitination and degradation. In Pongo abelii (Sumatran orangutan), this protein is F-box only protein 42 (FBXO42).